Here is a 91-residue protein sequence, read N- to C-terminus: Probable Fe(2+)-trafficking protein (91 aa).

Belongs to the Fe(2+)-trafficking protein family. Monomer.

Functionally, could be a mediator in iron transactions between iron acquisition and iron-requiring processes, such as synthesis and/or repair of Fe-S clusters in biosynthetic enzymes. The polypeptide is Probable Fe(2+)-trafficking protein (Klebsiella pneumoniae (strain 342)).